The primary structure comprises 581 residues: La-related protein 7 (581 aa).

An N-acetylmethionine modification is found at Met-1. Over residues 1–10 the composition is skewed to polar residues; it reads METESGNQKN. 3 disordered regions span residues 1 to 28, 188 to 368, and 410 to 440; these read METESGNQKNVMEEESTEKKKEVEKKKR, NPPE…ERHK, and KSESEMETDGGVPQKTGMKNEKTNSEECPTQ. An HTH La-type RNA-binding domain is found at 28–122; the sequence is RSRVKQVLAD…KPLGERPKDE (95 aa). One can recognise an RRM domain in the interval 125–203; sequence RTVYVELLPK…PRKPGIFPKT (79 aa). Positions 219-228 are enriched in basic residues; the sequence is KKKKKKKGRM. Positions 229–240 are enriched in basic and acidic residues; sequence KKEDNVQAKEEN. Residue Lys-237 forms a Glycyl lysine isopeptide (Lys-Gly) (interchain with G-Cter in SUMO2) linkage. Thr-257 is subject to Phosphothreonine. A phosphoserine mark is found at Ser-258, Ser-261, Ser-273, Ser-298, Ser-299, and Ser-300. The span at 316–335 shows a compositional bias: basic and acidic residues; that stretch reads IQKDIIKEPSEASKENRDIE. Ser-337 is subject to Phosphoserine. Thr-338 bears the Phosphothreonine mark. At Ser-351 the chain carries Phosphoserine. The span at 354 to 367 shows a compositional bias: basic residues; that stretch reads KTKRKHKKKHKERH. Lys-410 participates in a covalent cross-link: Glycyl lysine isopeptide (Lys-Gly) (interchain with G-Cter in SUMO2). Residues 449–562 enclose the xRRM domain; sequence QFVSGVIVKI…TEKLITKAEK (114 aa).

It belongs to the LARP7 family. In terms of assembly, core component of the 7SK RNP complex, at least composed of 7SK RNA, LARP7, MEPCE, HEXIM1 (or HEXIM2) and P-TEFb (composed of CDK9 and CCNT1/cyclin-T1). Interacts with METTL16. Interacts with RBM7; upon genotoxic stress this interaction is enhanced, triggering the release of inactive P-TEFb complex from the core, yielding to P-TEFb complex activation. Associates with box C/D small nucleolar ribonucleoprotein (snoRNP) complexes.

It localises to the nucleus. Its subcellular location is the nucleoplasm. Functionally, RNA-binding protein that specifically binds distinct small nuclear RNA (snRNAs) and regulates their processing and function. Specifically binds the 7SK snRNA (7SK RNA) and acts as a core component of the 7SK ribonucleoprotein (RNP) complex, thereby acting as a negative regulator of transcription elongation by RNA polymerase II. The 7SK RNP complex sequesters the positive transcription elongation factor b (P-TEFb) in a large inactive 7SK RNP complex preventing RNA polymerase II phosphorylation and subsequent transcriptional elongation. The 7SK RNP complex also promotes snRNA gene transcription by RNA polymerase II via interaction with the little elongation complex (LEC). LARP7 specifically binds to the highly conserved 3'-terminal U-rich stretch of 7SK RNA; on stimulation, remains associated with 7SK RNA, whereas P-TEFb is released from the complex. LARP7 also acts as a regulator of mRNA splicing fidelity by promoting U6 snRNA processing. Specifically binds U6 snRNAs and associates with a subset of box C/D RNP complexes: promotes U6 snRNA 2'-O-methylation by facilitating U6 snRNA loading into box C/D RNP complexes. U6 snRNA 2'-O-methylation is required for mRNA splicing fidelity. Binds U6 snRNAs with a 5'-CAGGG-3' sequence motif. U6 snRNA processing is required for spermatogenesis. In Macaca fascicularis (Crab-eating macaque), this protein is La-related protein 7.